The chain runs to 328 residues: GMP reductase (328 aa).

Residue cysteine 177 is the Thioimidate intermediate of the active site. 206–229 (IVADGGIRYNGDIAKSIRFGASMV) provides a ligand contact to NADP(+).

It belongs to the IMPDH/GMPR family. GuaC type 2 subfamily.

The catalysed reaction is IMP + NH4(+) + NADP(+) = GMP + NADPH + 2 H(+). Functionally, catalyzes the irreversible NADPH-dependent deamination of GMP to IMP. It functions in the conversion of nucleobase, nucleoside and nucleotide derivatives of G to A nucleotides, and in maintaining the intracellular balance of A and G nucleotides. The sequence is that of GMP reductase from Levilactobacillus brevis (strain ATCC 367 / BCRC 12310 / CIP 105137 / JCM 1170 / LMG 11437 / NCIMB 947 / NCTC 947) (Lactobacillus brevis).